The primary structure comprises 150 residues: Deoxyuridine 5'-triphosphate nucleotidohydrolase (150 aa).

Residues 69-71 (RSG), N82, 86-88 (LID), and M96 contribute to the substrate site.

The protein belongs to the dUTPase family. It depends on Mg(2+) as a cofactor.

The catalysed reaction is dUTP + H2O = dUMP + diphosphate + H(+). Its pathway is pyrimidine metabolism; dUMP biosynthesis; dUMP from dCTP (dUTP route): step 2/2. Functionally, this enzyme is involved in nucleotide metabolism: it produces dUMP, the immediate precursor of thymidine nucleotides and it decreases the intracellular concentration of dUTP so that uracil cannot be incorporated into DNA. The chain is Deoxyuridine 5'-triphosphate nucleotidohydrolase from Acinetobacter baumannii (strain AB307-0294).